The primary structure comprises 216 residues: Imidazole glycerol phosphate synthase subunit HisH (216 aa).

The 215-residue stretch at 2–216 (RVAIIDYGSG…LITNFLRWRP (215 aa)) folds into the Glutamine amidotransferase type-1 domain. Residue cysteine 88 is the Nucleophile of the active site. Residues histidine 196 and glutamate 198 contribute to the active site.

As to quaternary structure, heterodimer of HisH and HisF.

The protein localises to the cytoplasm. The catalysed reaction is 5-[(5-phospho-1-deoxy-D-ribulos-1-ylimino)methylamino]-1-(5-phospho-beta-D-ribosyl)imidazole-4-carboxamide + L-glutamine = D-erythro-1-(imidazol-4-yl)glycerol 3-phosphate + 5-amino-1-(5-phospho-beta-D-ribosyl)imidazole-4-carboxamide + L-glutamate + H(+). It catalyses the reaction L-glutamine + H2O = L-glutamate + NH4(+). It participates in amino-acid biosynthesis; L-histidine biosynthesis; L-histidine from 5-phospho-alpha-D-ribose 1-diphosphate: step 5/9. Functionally, IGPS catalyzes the conversion of PRFAR and glutamine to IGP, AICAR and glutamate. The HisH subunit catalyzes the hydrolysis of glutamine to glutamate and ammonia as part of the synthesis of IGP and AICAR. The resulting ammonia molecule is channeled to the active site of HisF. This chain is Imidazole glycerol phosphate synthase subunit HisH, found in Mesorhizobium japonicum (strain LMG 29417 / CECT 9101 / MAFF 303099) (Mesorhizobium loti (strain MAFF 303099)).